A 365-amino-acid polypeptide reads, in one-letter code: Probable dual-specificity RNA methyltransferase RlmN (365 aa).

Glutamate 106 (proton acceptor) is an active-site residue. Positions 112–352 (YPDRVTLCVS…VTVRDTRGRE (241 aa)) constitute a Radical SAM core domain. A disulfide bond links cysteine 119 and cysteine 357. Cysteine 126, cysteine 130, and cysteine 133 together coordinate [4Fe-4S] cluster. S-adenosyl-L-methionine-binding positions include 181-182 (GE), serine 215, 238-240 (SLH), and asparagine 314. The active-site S-methylcysteine intermediate is the cysteine 357.

This sequence belongs to the radical SAM superfamily. RlmN family. [4Fe-4S] cluster is required as a cofactor.

The protein resides in the cytoplasm. It catalyses the reaction adenosine(2503) in 23S rRNA + 2 reduced [2Fe-2S]-[ferredoxin] + 2 S-adenosyl-L-methionine = 2-methyladenosine(2503) in 23S rRNA + 5'-deoxyadenosine + L-methionine + 2 oxidized [2Fe-2S]-[ferredoxin] + S-adenosyl-L-homocysteine. The catalysed reaction is adenosine(37) in tRNA + 2 reduced [2Fe-2S]-[ferredoxin] + 2 S-adenosyl-L-methionine = 2-methyladenosine(37) in tRNA + 5'-deoxyadenosine + L-methionine + 2 oxidized [2Fe-2S]-[ferredoxin] + S-adenosyl-L-homocysteine. Functionally, specifically methylates position 2 of adenine 2503 in 23S rRNA and position 2 of adenine 37 in tRNAs. The protein is Probable dual-specificity RNA methyltransferase RlmN of Thermobifida fusca (strain YX).